Here is a 285-residue protein sequence, read N- to C-terminus: Polyamine aminopropyltransferase (285 aa).

Residues 5–241 (DTWFTEHFQA…GWWSVTLSSK (237 aa)) form the PABS domain. Glutamine 35 lines the S-methyl-5'-thioadenosine pocket. Residues histidine 66 and aspartate 90 each contribute to the spermidine site. Residues aspartate 110 and 141–142 (DG) each bind S-methyl-5'-thioadenosine. Aspartate 160 acts as the Proton acceptor in catalysis. Residue 160 to 163 (DSTD) coordinates spermidine. S-methyl-5'-thioadenosine is bound at residue proline 167.

Belongs to the spermidine/spermine synthase family. In terms of assembly, homodimer or homotetramer.

It is found in the cytoplasm. It carries out the reaction S-adenosyl 3-(methylsulfanyl)propylamine + putrescine = S-methyl-5'-thioadenosine + spermidine + H(+). It participates in amine and polyamine biosynthesis; spermidine biosynthesis; spermidine from putrescine: step 1/1. Catalyzes the irreversible transfer of a propylamine group from the amino donor S-adenosylmethioninamine (decarboxy-AdoMet) to putrescine (1,4-diaminobutane) to yield spermidine. The sequence is that of Polyamine aminopropyltransferase from Xylella fastidiosa (strain M12).